Reading from the N-terminus, the 28-residue chain is Kappa-stichotoxin-Shd1a/kappa-stichotoxin-Shd1b (28 aa).

A 4-hydroxyproline; in form SHTX-1 (Shd1a) modification is found at proline 6. 2 disulfides stabilise this stretch: cysteine 7–cysteine 19 and cysteine 10–cysteine 25.

It belongs to the sea anemone BBH family. Occurs in 2 forms which differ in the post-translational modification of Pro-6. In form SHTX-1 (Shd1a) Pro-6 is a hydroxyproline while in form SHTX-2 (Shd1b) Pro-6 is unmodified.

Its subcellular location is the secreted. It localises to the nematocyst. Its function is as follows. Kappa-stichotoxin-Shd1a: inhibits voltage-gated potassium channels (Kv). Functionally, kappa-stichotoxin-Shd1b: inhibits voltage-gated potassium channels (Kv). This toxin inhibits the binding of 125I-alpha-dendrotoxin to synaptosomal membranes (IC(50)=270 nM). The chain is Kappa-stichotoxin-Shd1a/kappa-stichotoxin-Shd1b from Stichodactyla haddoni (Saddle carpet anemone).